Reading from the N-terminus, the 395-residue chain is Guanine nucleotide-binding protein subunit beta-5b (395 aa).

WD repeat units follow at residues 103-142 (GHGN…KEHA), 145-184 (MPCT…NENL), 193-234 (MHTN…QSFH), 235-276 (GHSA…NVQS), 279-318 (THDS…EVAI), 320-362 (SKDS…RVAI), and 365-395 (GHEN…RIWA).

It belongs to the WD repeat G protein beta family. May interact with RGS9; this interaction stabilizes both proteins and increases RGS9 GTPase-activating protein (GAP) activity, hence accelerating the deactivation of D(2) dopamine receptor-mediated signaling.

Its subcellular location is the membrane. Its function is as follows. Enhances GTPase-activating protein (GAP) activity of regulator of G protein signaling (RGS) proteins, such as RGS7 and RGS9, hence involved in the termination of the signaling initiated by the G protein coupled receptors (GPCRs) by accelerating the GTP hydrolysis on the G-alpha subunits, thereby promoting their inactivation. Increases RGS7 GTPase-activating protein (GAP) activity, thereby regulating mood and cognition. Increases RGS9 GTPase-activating protein (GAP) activity, hence contributes to the deactivation of G protein signaling initiated by D(2) dopamine receptors. Along with gnb5a, plays an important role in neuronal signaling, including in the parasympathetic, but not sympathetic, control of heart rate. In Danio rerio (Zebrafish), this protein is Guanine nucleotide-binding protein subunit beta-5b.